The primary structure comprises 333 residues: DNA-directed RNA polymerase subunit alpha (333 aa).

The tract at residues 1 to 234 is alpha N-terminal domain (alpha-NTD); the sequence is MQSSVNEFLT…QQLAAFVDLK (234 aa). The tract at residues 248-333 is alpha C-terminal domain (alpha-CTD); sequence IDPILLRPVD…SLKKDDKATA (86 aa).

Belongs to the RNA polymerase alpha chain family. In terms of assembly, homodimer. The RNAP catalytic core consists of 2 alpha, 1 beta, 1 beta' and 1 omega subunit. When a sigma factor is associated with the core the holoenzyme is formed, which can initiate transcription.

It carries out the reaction RNA(n) + a ribonucleoside 5'-triphosphate = RNA(n+1) + diphosphate. Functionally, DNA-dependent RNA polymerase catalyzes the transcription of DNA into RNA using the four ribonucleoside triphosphates as substrates. The chain is DNA-directed RNA polymerase subunit alpha from Pseudomonas putida (Arthrobacter siderocapsulatus).